A 155-amino-acid polypeptide reads, in one-letter code: Biotin carboxyl carrier protein of acetyl-CoA carboxylase (155 aa).

One can recognise a Biotinyl-binding domain in the interval 72–155; that stretch reads AASDELSGHL…EFDEPLIVIE (84 aa). K121 carries the N6-biotinyllysine modification.

In terms of assembly, homodimer.

Its pathway is lipid metabolism; fatty acid biosynthesis. In terms of biological role, this protein is a component of the acetyl coenzyme A carboxylase complex; first, biotin carboxylase catalyzes the carboxylation of the carrier protein and then the transcarboxylase transfers the carboxyl group to form malonyl-CoA. The protein is Biotin carboxyl carrier protein of acetyl-CoA carboxylase (accB) of Haemophilus influenzae (strain ATCC 51907 / DSM 11121 / KW20 / Rd).